A 453-amino-acid chain; its full sequence is Exodeoxyribonuclease 7 large subunit (453 aa).

The protein belongs to the XseA family. As to quaternary structure, heterooligomer composed of large and small subunits.

It is found in the cytoplasm. The enzyme catalyses Exonucleolytic cleavage in either 5'- to 3'- or 3'- to 5'-direction to yield nucleoside 5'-phosphates.. Its function is as follows. Bidirectionally degrades single-stranded DNA into large acid-insoluble oligonucleotides, which are then degraded further into small acid-soluble oligonucleotides. The chain is Exodeoxyribonuclease 7 large subunit from Rickettsia typhi (strain ATCC VR-144 / Wilmington).